The following is a 553-amino-acid chain: Transcription factor GAMYB (553 aa).

Residues 1 to 17 (MYRVKSESDCDMIHQEQ) show a composition bias toward basic and acidic residues. The tract at residues 1–45 (MYRVKSESDCDMIHQEQMDSPVADDGSSGGSPHRGGGPPLKKGPW) is disordered. The span at 27–38 (SSGGSPHRGGGP) shows a compositional bias: gly residues. 2 HTH myb-type domains span residues 37–89 (GPPL…ANHL) and 90–144 (RPNL…KRCQ). DNA-binding regions (H-T-H motif) lie at residues 65 to 89 (WNAV…ANHL) and 117 to 140 (WARM…NTRI). Residues 464 to 489 (PAQSTSMGSGEQVMGPKYEPGDTSPH) are disordered.

As to quaternary structure, interacts with MYBS1. Expressed in aleurone cells, inflorescence shoot apical region, stamen primordia, and tapetum cells of the anther. Expressed at low level in roots and vegetative shoots.

It is found in the nucleus. Transcriptional activator of gibberellin-dependent alpha-amylase expression in aleurone cells. Involved in pollen and floral organs development. May bind to the 5'-TAACAAA-3' box of alpha-amylase promoter. Required for anther development. Functions in parallel with UDT1 to regulate early anther development. Functions upstream of the transcription factor TDR and may positively regulate its transcription. Required for pollen development. Probably required for controlling tapetal cell size and promoting tapetal programmed cell death (PCD) during anther development. Required for exine and Ubisch body formation in anthers. Interacts with the DNA specific motifs of giberrellin-up-regulated genes of anthers and regulates their expression. Positively regulates the expression of the laurate hydroxylase CYP703A3, known to be essential for the development of pollen exine and anther epicuticular layer. Functions with MYBS1 to integrate diverse nutrient starvation and gibberellin (GA) signaling pathways during germination of grains. Sugar, nitrogen and phosphate starvation signals converge and interconnect with GA to promote the co-nuclear import of GAMYB and MYBS1, resulting in the expression of a large set of GA-inducible hydrolases, transporters and regulators that are essential for mobilization of nutrient reserves in the endosperm to support seedling growth. This chain is Transcription factor GAMYB, found in Oryza sativa subsp. japonica (Rice).